The following is a 938-amino-acid chain: Isoleucine--tRNA ligase (938 aa).

A 'HIGH' region motif is present at residues 58–68; that stretch reads PYANGNIHMGH. Glu-566 lines the L-isoleucyl-5'-AMP pocket. A 'KMSKS' region motif is present at residues 607–611; the sequence is KMSKS. Lys-610 contributes to the ATP binding site. Positions 906, 909, 926, and 929 each coordinate Zn(2+).

It belongs to the class-I aminoacyl-tRNA synthetase family. IleS type 1 subfamily. As to quaternary structure, monomer. Zn(2+) is required as a cofactor.

The protein localises to the cytoplasm. It carries out the reaction tRNA(Ile) + L-isoleucine + ATP = L-isoleucyl-tRNA(Ile) + AMP + diphosphate. Functionally, catalyzes the attachment of isoleucine to tRNA(Ile). As IleRS can inadvertently accommodate and process structurally similar amino acids such as valine, to avoid such errors it has two additional distinct tRNA(Ile)-dependent editing activities. One activity is designated as 'pretransfer' editing and involves the hydrolysis of activated Val-AMP. The other activity is designated 'posttransfer' editing and involves deacylation of mischarged Val-tRNA(Ile). This Nitratidesulfovibrio vulgaris (strain ATCC 29579 / DSM 644 / CCUG 34227 / NCIMB 8303 / VKM B-1760 / Hildenborough) (Desulfovibrio vulgaris) protein is Isoleucine--tRNA ligase.